Consider the following 248-residue polypeptide: Probable transcriptional regulatory protein PP_1214 (248 aa).

The disordered stretch occupies residues methionine 1–arginine 21.

Belongs to the TACO1 family.

The protein resides in the cytoplasm. In Pseudomonas putida (strain ATCC 47054 / DSM 6125 / CFBP 8728 / NCIMB 11950 / KT2440), this protein is Probable transcriptional regulatory protein PP_1214.